The primary structure comprises 227 residues: PKHD-type hydroxylase ACICU_00484 (227 aa).

The Fe2OG dioxygenase domain maps to 78-178; that stretch reads DIIPPLFNRY…RIASFFWVQS (101 aa). Residues histidine 96, aspartate 98, and histidine 159 each coordinate Fe cation. Arginine 169 contributes to the 2-oxoglutarate binding site.

The cofactor is Fe(2+). Requires L-ascorbate as cofactor.

This is PKHD-type hydroxylase ACICU_00484 from Acinetobacter baumannii (strain ACICU).